Consider the following 210-residue polypeptide: N-(5'-phosphoribosyl)anthranilate isomerase (210 aa).

Belongs to the TrpF family.

The catalysed reaction is N-(5-phospho-beta-D-ribosyl)anthranilate = 1-(2-carboxyphenylamino)-1-deoxy-D-ribulose 5-phosphate. The protein operates within amino-acid biosynthesis; L-tryptophan biosynthesis; L-tryptophan from chorismate: step 3/5. This chain is N-(5'-phosphoribosyl)anthranilate isomerase (TRP1), found in Eremothecium gossypii (strain ATCC 10895 / CBS 109.51 / FGSC 9923 / NRRL Y-1056) (Yeast).